A 266-amino-acid chain; its full sequence is MKFIAENLTKLRTISPLVQNITNYVVMNSTANTLLALGASPVMAHAKEELEEMIAISSALVVNIGTLDEYWIPSMEKAVKIASDLKKPIILDPVGAGATKLRTNTALKLLDIGNVSVLRGNFGEISALLGEHGKTKGVDSAVYDNNEALNISKNASKEFNTVSTVTGPIDYVSNGKEIYSISNGHEMLSKVTGTGCASTSIIGAFLAVEEPLKASVSGLVTYGISAEMAFEESFYPGTFQAKLYDWLYRIDEKLILEKAKVNRIDI.

M43 is a substrate binding site. R119 and T166 together coordinate ATP. G193 is a substrate binding site.

Belongs to the Thz kinase family. Requires Mg(2+) as cofactor.

The catalysed reaction is 5-(2-hydroxyethyl)-4-methylthiazole + ATP = 4-methyl-5-(2-phosphooxyethyl)-thiazole + ADP + H(+). The protein operates within cofactor biosynthesis; thiamine diphosphate biosynthesis; 4-methyl-5-(2-phosphoethyl)-thiazole from 5-(2-hydroxyethyl)-4-methylthiazole: step 1/1. In terms of biological role, catalyzes the phosphorylation of the hydroxyl group of 4-methyl-5-beta-hydroxyethylthiazole (THZ). The protein is Hydroxyethylthiazole kinase of Methanococcus vannielii (strain ATCC 35089 / DSM 1224 / JCM 13029 / OCM 148 / SB).